The following is a 573-amino-acid chain: MSAFCLGLVGRASAPAEPDSACCMELPAAAGDAVRSPAAAAALIFPGGSGELELALEEELALLAAGERPSDPGEHPQAEPGSLAEGAGPQPPPSQDPELLSVIRQKEKDLVLAARLGKALLERNQDMSRQYEQMHKELTDKLEHLEQEKHELRRRFENREGEWEGRVSELESDVKQLQDELERQQIHLREADREKSRAVQELSEQNQRLLDQLSRASEVERQLSMQVHALREDFREKNSSTNQHIIRLESLQAEIKMLSDRKRELEHRLSATLEENDLLQGTVEELQDRVLILERQGHDKDLQLHQSQLELQEVRLSCRQLQVKVEELTEERSLQSSAATSTSLLSEIEQSMEAEELEQEREQLRLQLWEAYCQVRYLCSHLRGNDSADSAVSTDSSMDESSETSSAKDVPAGSLRTALNELKRLIQSIVDGMEPTVTLLSVEMTALKEERDRLRVTSEDKEPKEQLQKAIRDRDEAIAKKNAVELELAKCRMDMMSLNSQLLDAIQQKLNLSQQLEAWQDDMHRVIDRQLMDTHLKERSQPAAALCRGHSAGRGDEPSIAEGKRLFSFFRKI.

The interval 67 to 97 (ERPSDPGEHPQAEPGSLAEGAGPQPPPSQDP) is disordered. The span at 68–77 (RPSDPGEHPQ) shows a compositional bias: basic and acidic residues. Residues 113–117 (AARLG) carry the CC1 box motif. The stretch at 118 to 376 (KALLERNQDM…QLWEAYCQVR (259 aa)) forms a coiled coil. Residues 386-412 (DSADSAVSTDSSMDESSETSSAKDVPA) are disordered. Over residues 387–396 (SADSAVSTDS) the composition is skewed to low complexity. The stretch at 440 to 525 (LSVEMTALKE…LEAWQDDMHR (86 aa)) forms a coiled coil.

Belongs to the BICDR family. As to quaternary structure, part of a tripartite complex with dynein and dynactin, acts an adapter linking the dynein motor complex and dynactin. Interacts with KIF1C. Interacts with RAB6A and RAB6B; interaction is specific to Rab6.

The protein localises to the cytoplasm. Its subcellular location is the cytoskeleton. It localises to the microtubule organizing center. The protein resides in the centrosome. In terms of biological role, acts as an adapter protein linking the dynein motor complex to various cargos and converts dynein from a non-processive to a highly processive motor in the presence of dynactin. Facilitates the interaction between dynein and dynactin and activates dynein processivity (the ability to move along a microtubule for a long distance without falling off the track). Predominantly recruits 2 dyneins, which increases both the force and speed of the microtubule motor. Component of secretory vesicle machinery in developing neurons that acts as a regulator of neurite outgrowth. Regulates the secretory vesicle transport by controlling the accumulation of Rab6-containing secretory vesicles in the pericentrosomal region restricting anterograde secretory transport during the early phase of neuronal differentiation, thereby inhibiting neuritogenesis. This chain is BICD family-like cargo adapter 1 (BICDL1), found in Homo sapiens (Human).